Reading from the N-terminus, the 488-residue chain is Serine/threonine-protein kinase 32C (488 aa).

Residues 1–56 form a disordered region; that stretch reads MRSGAERRGSSAAAPPSSPPPGRARPAGSDVSPALPPPAASQPRARDAGDARAQPR. Residues Ser10, Ser17, and Ser18 each carry the phosphoserine modification. Residues 24-33 are compositionally biased toward low complexity; that stretch reads ARPAGSDVSP. The region spanning 94–354 is the Protein kinase domain; sequence FQILRAIGKG…LQDMQTAPSL (261 aa). Residues 100–108 and Lys123 contribute to the ATP site; that span reads IGKGSFGKV. Asp217 (proton acceptor) is an active-site residue. A compositionally biased stretch (basic residues) spans 397–406; that stretch reads HKKKKRLAKN. 2 disordered regions span residues 397-420 and 443-488; these read HKKKKRLAKNKSRDSSRDSSQSEN and KRSQ…SGSS.

This sequence belongs to the protein kinase superfamily. Ser/Thr protein kinase family. Mg(2+) serves as cofactor.

It carries out the reaction L-seryl-[protein] + ATP = O-phospho-L-seryl-[protein] + ADP + H(+). It catalyses the reaction L-threonyl-[protein] + ATP = O-phospho-L-threonyl-[protein] + ADP + H(+). The chain is Serine/threonine-protein kinase 32C from Mus musculus (Mouse).